The chain runs to 214 residues: 3-isopropylmalate dehydratase small subunit (214 aa).

It belongs to the LeuD family. LeuD type 1 subfamily. In terms of assembly, heterodimer of LeuC and LeuD.

The enzyme catalyses (2R,3S)-3-isopropylmalate = (2S)-2-isopropylmalate. Its pathway is amino-acid biosynthesis; L-leucine biosynthesis; L-leucine from 3-methyl-2-oxobutanoate: step 2/4. In terms of biological role, catalyzes the isomerization between 2-isopropylmalate and 3-isopropylmalate, via the formation of 2-isopropylmaleate. The protein is 3-isopropylmalate dehydratase small subunit of Pseudomonas fluorescens (strain ATCC BAA-477 / NRRL B-23932 / Pf-5).